The chain runs to 106 residues: UPF0145 protein PSEEN3024 (106 aa).

This sequence belongs to the UPF0145 family.

This is UPF0145 protein PSEEN3024 from Pseudomonas entomophila (strain L48).